The chain runs to 282 residues: Pantothenate synthetase (282 aa).

Residue 30–37 (MGFLHDGH) coordinates ATP. His37 serves as the catalytic Proton donor. Gln60 provides a ligand contact to (R)-pantoate. Gln60 is a beta-alanine binding site. Position 146–149 (146–149 (GQKD)) interacts with ATP. Gln152 contacts (R)-pantoate. ATP contacts are provided by residues Ile175 and 183–186 (KSSR).

This sequence belongs to the pantothenate synthetase family. As to quaternary structure, homodimer.

The protein resides in the cytoplasm. The catalysed reaction is (R)-pantoate + beta-alanine + ATP = (R)-pantothenate + AMP + diphosphate + H(+). Its pathway is cofactor biosynthesis; (R)-pantothenate biosynthesis; (R)-pantothenate from (R)-pantoate and beta-alanine: step 1/1. Catalyzes the condensation of pantoate with beta-alanine in an ATP-dependent reaction via a pantoyl-adenylate intermediate. This Campylobacter jejuni subsp. jejuni serotype O:23/36 (strain 81-176) protein is Pantothenate synthetase.